Consider the following 164-residue polypeptide: UPF0303 protein RHECIAT_CH0003058 (164 aa).

Belongs to the UPF0303 family.

This chain is UPF0303 protein RHECIAT_CH0003058, found in Rhizobium etli (strain CIAT 652).